Consider the following 23-residue polypeptide: Cytochrome c oxidase subunit 7A-liver, mitochondrial (23 aa).

Belongs to the cytochrome c oxidase VIIa family. Component of the cytochrome c oxidase (complex IV, CIV), a multisubunit enzyme composed of 14 subunits. The complex is composed of a catalytic core of 3 subunits MT-CO1, MT-CO2 and MT-CO3, encoded in the mitochondrial DNA, and 11 supernumerary subunits COX4I, COX5A, COX5B, COX6A, COX6B, COX6C, COX7A, COX7B, COX7C, COX8 and NDUFA4, which are encoded in the nuclear genome. The complex exists as a monomer or a dimer and forms supercomplexes (SCs) in the inner mitochondrial membrane with NADH-ubiquinone oxidoreductase (complex I, CI) and ubiquinol-cytochrome c oxidoreductase (cytochrome b-c1 complex, complex III, CIII), resulting in different assemblies (supercomplex SCI(1)III(2)IV(1) and megacomplex MCI(2)III(2)IV(2)).

It is found in the mitochondrion inner membrane. The protein operates within energy metabolism; oxidative phosphorylation. In terms of biological role, component of the cytochrome c oxidase, the last enzyme in the mitochondrial electron transport chain which drives oxidative phosphorylation. The respiratory chain contains 3 multisubunit complexes succinate dehydrogenase (complex II, CII), ubiquinol-cytochrome c oxidoreductase (cytochrome b-c1 complex, complex III, CIII) and cytochrome c oxidase (complex IV, CIV), that cooperate to transfer electrons derived from NADH and succinate to molecular oxygen, creating an electrochemical gradient over the inner membrane that drives transmembrane transport and the ATP synthase. Cytochrome c oxidase is the component of the respiratory chain that catalyzes the reduction of oxygen to water. Electrons originating from reduced cytochrome c in the intermembrane space (IMS) are transferred via the dinuclear copper A center (CU(A)) of subunit 2 and heme A of subunit 1 to the active site in subunit 1, a binuclear center (BNC) formed by heme A3 and copper B (CU(B)). The BNC reduces molecular oxygen to 2 water molecules using 4 electrons from cytochrome c in the IMS and 4 protons from the mitochondrial matrix. The polypeptide is Cytochrome c oxidase subunit 7A-liver, mitochondrial (Oncorhynchus mykiss (Rainbow trout)).